Reading from the N-terminus, the 372-residue chain is Recombinase Flp protein (372 aa).

The region spanning 85 to 367 is the Tyr recombinase Flp-type domain; the sequence is GGHNAVAEEI…EYVHSYAMGK (283 aa). Tyrosine 292 functions as the O-(3'-phospho-DNA)-tyrosine intermediate in the catalytic mechanism.

It belongs to the 'phage' integrase family.

Its function is as follows. Catalyzes the recombination between the large inverted repetitions of the plasmid. This chain is Recombinase Flp protein, found in Lachancea fermentati (Zygosaccharomyces fermentati).